Reading from the N-terminus, the 100-residue chain is Cytochrome bo(3) ubiquinol oxidase subunit 4 (100 aa).

Residues 1 to 9 (MLKNRYLKY) lie on the Cytoplasmic side of the membrane. Residues 10–32 (LFILILLSILSIMPIFAIIYRIF) form a helical membrane-spanning segment. At 33-36 (SRNY) the chain is on the extracellular side. A helical transmembrane segment spans residues 37-59 (LYAFIIVCLFFQILAHIKFFLNL). Over 60 to 68 (DFSLEQRWK) the chain is Cytoplasmic. The helical transmembrane segment at 69–90 (LISVIFSLVVGLIILLGSIWVI) threads the bilayer. At 91-100 (KNLNNNLCIM) the chain is on the extracellular side.

It belongs to the cytochrome c oxidase bacterial subunit 4 family. In terms of assembly, heterooctamer of two A chains, two B chains, two C chains and two D chains.

Its subcellular location is the cell membrane. Functionally, cytochrome bo(3) ubiquinol terminal oxidase is the component of the aerobic respiratory chain of E.coli that predominates when cells are grown at high aeration. Has proton pump activity across the membrane in addition to electron transfer, pumping 2 protons/electron. The protein is Cytochrome bo(3) ubiquinol oxidase subunit 4 (cyoD) of Buchnera aphidicola subsp. Baizongia pistaciae (strain Bp).